A 1856-amino-acid chain; its full sequence is DNA-directed RNA polymerase II subunit RPB1 (1856 aa).

Zn(2+)-binding residues include Cys66, Cys69, Cys76, His79, Cys106, Cys109, Cys149, and Cys177. The lid loop stretch occupies residues 256-268; it reads PAVVTFGSAKNQD. Residues 314-331 are rudder loop; that stretch reads NCIPGLPTATQKGGRPLK. Positions 489, 491, and 493 each coordinate Mg(2+). The bridging helix stretch occupies residues 827 to 839; that stretch reads PSEFFFHAMGGRE. Lys1260 is covalently cross-linked (Glycyl lysine isopeptide (Lys-Gly) (interchain with G-Cter in ubiquitin)). The tract at residues 1523 to 1856 is disordered; sequence PTTGGMSPGA…PSSPTYDPNS (334 aa). Residues 1587 to 1856 are compositionally biased toward low complexity; it reads SMTSPHYSPT…PSSPTYDPNS (270 aa). Repeat copies occupy residues 1593-1599, 1600-1606, 1616-1622, 1623-1629, 1630-1636, 1637-1643, 1644-1650, 1651-1657, 1658-1664, 1665-1671, 1672-1678, 1679-1685, 1686-1692, 1693-1699, 1700-1706, 1707-1713, 1720-1726, 1727-1733, 1734-1740, 1741-1747, 1748-1754, 1755-1761, 1769-1775, 1782-1788, 1789-1795, 1796-1802, and 1803-1809. The segment at 1593 to 1816 is C-terminal domain (CTD); 28 X 7 AA approximate tandem repeats of Y-[ST]-P-[ST]-S-P-[AGKNQRST]; it reads YSPTSPSYSP…SPTYTPSPSE (224 aa). Residues 1810-1816 form a 28; approximate repeat; it reads YTPSPSE.

It belongs to the RNA polymerase beta' chain family. As to quaternary structure, component of the RNA polymerase II (Pol II) complex consisting of 12 subunits. Interacts with sig-7. The tandem 7 residues repeats in the C-terminal domain (CTD) can be highly phosphorylated. The phosphorylation activates Pol II. Phosphorylation occurs mainly at residues 'Ser-2' and 'Ser-5' of the heptapeptide repeat and starts at the 3- to 4-cell embryonic stage. This phosphorylation also occurs in the early stages of oocyte development and is not detected in oocytes arrested at the meiotic diakinesis stage. In the somatic lineage, phosphorylation at 'Ser-2' is mediated by cdk-12 downstream of cdk-9 whereas in the germline lineage cdk-12 phosphorylates 'Ser-2' independently of cdk-9. Phosphorylation is likely mediated by cdk-7. May be dephosphorylated by fcp-1 in diakinetic oocytes and in 1-cell and 2-cell embryos. Dephosphorylated at 'Ser-5' of the heptapeptide repeats by ssup-72. The phosphorylation state is believed to result from the balanced action of site-specific CTD kinases and phosphatase, and a 'CTD code' that specifies the position of Pol II within the transcription cycle has been proposed. In terms of processing, following transcription stress, the elongating form of RNA polymerase II (RNA pol IIo) is polyubiquitinated via 'Lys-63'-linkages on Lys-1260 at DNA damage sites without leading to degradation: ubiquitination promotes RNA pol IIo backtracking to allow access by the transcription-coupled nucleotide excision repair (TC-NER) machinery. Subsequent DEF1-dependent polyubiquitination by the elongin complex via 'Lys-48'-linkages may lead to proteasome-mediated degradation; presumably at stalled RNA pol II where TC-NER has failed, to halt global transcription and enable 'last resort' DNA repair pathways.

The protein resides in the nucleus. It is found in the chromosome. The enzyme catalyses RNA(n) + a ribonucleoside 5'-triphosphate = RNA(n+1) + diphosphate. In terms of biological role, DNA-dependent RNA polymerase catalyzes the transcription of DNA into RNA using the four ribonucleoside triphosphates as substrates. Largest and catalytic component of RNA polymerase II which synthesizes mRNA precursors and many functional non-coding RNAs. Forms the polymerase active center together with the second largest subunit. Pol II is the central component of the basal RNA polymerase II transcription machinery. It is composed of mobile elements that move relative to each other. RPB1 is part of the core element with the central large cleft, the clamp element that moves to open and close the cleft and the jaws that are thought to grab the incoming DNA template. At the start of transcription, a single-stranded DNA template strand of the promoter is positioned within the central active site cleft of Pol II. A bridging helix emanates from RPB1 and crosses the cleft near the catalytic site and is thought to promote translocation of Pol II by acting as a ratchet that moves the RNA-DNA hybrid through the active site by switching from straight to bent conformations at each step of nucleotide addition. During transcription elongation, Pol II moves on the template as the transcript elongates. Elongation is influenced by the phosphorylation status of the C-terminal domain (CTD) of Pol II largest subunit (RPB1), which serves as a platform for assembly of factors that regulate transcription initiation, elongation, termination and mRNA processing. Involved in the transcription of several genes including those involved in embryogenesis. The sequence is that of DNA-directed RNA polymerase II subunit RPB1 from Caenorhabditis elegans.